We begin with the raw amino-acid sequence, 680 residues long: MSVAPPAPSPPPFDPTKPSTPISFPIKTLQDLKSRSYFDSFHYPFNRSSVPLRRNIGALSDRPRLLVCHDMKGGYVDDKWVQGCGNNAGYAIWDWYLMDVFVYFSHSLVTLPPPCWTNTAHRHGVKVLGTFITEWDEGKATCKELLATKESAQMYAERLAELAAALGFDGWLINIENVIDEVQIPNLMVFVSHLTKVMHSSVPGGLVIWYDSVTIDGHLAWQDQLTENNKPFFDICDGIFMNYTWKENYPKASAEIAGDRKYDVYMGIDVFGRGTYGGGQWTANVALDLLKSSNVSAAIFAPGWVYETEQPPDFYTAQNKWWSLVEKSWGIVQTYPQVLPFYSDFNQGLGSHTSLGGRKLSEAPWYNISCQSLQPFLEFNEGRNSETIQVTVDGREASYNGGGNVSFRGKLKRNAHFTARLFKPQLQLSAAPISIFFSVKSDKRSELSILLHFSSPSQEKKSMLMVPNESINRFGDMFLPCLLTSKQTTSGWTVHETNLVLDGHTLTEISAFCSRPDDLTEETNTLEYFALLGHISIKSQQKAKVYPLASSWVIEAHHVKFVPGDSGSKTLSCKLEWRLKHPEEDSVFPKYNVYAENLSSSEYRPRKVMEEPRSEKVFLGTAHVDAYYVSEMVVGSDVKGVRFVVQTCGEDGSWQELDASPNLVVEVERVSSKLCCCGLI.

Residues 1–15 are compositionally biased toward pro residues; sequence MSVAPPAPSPPPFDP. Positions 1-21 are disordered; the sequence is MSVAPPAPSPPPFDPTKPSTP.

The protein belongs to the glycosyl hydrolase 85 family.

It localises to the cytoplasm. The protein localises to the cytosol. It carries out the reaction an N(4)-(oligosaccharide-(1-&gt;3)-[oligosaccharide-(1-&gt;6)]-beta-D-Man-(1-&gt;4)-beta-D-GlcNAc-(1-&gt;4)-alpha-D-GlcNAc)-L-asparaginyl-[protein] + H2O = an oligosaccharide-(1-&gt;3)-[oligosaccharide-(1-&gt;6)]-beta-D-Man-(1-&gt;4)-D-GlcNAc + N(4)-(N-acetyl-beta-D-glucosaminyl)-L-asparaginyl-[protein]. In terms of biological role, endoglycosidase that releases N-glycans from glycoproteins by cleaving the beta-1,4-glycosidic bond in the N,N'-diacetylchitobiose core. Involved in the production of high-mannose type N-glycans during plant development and fruit maturation. This is Cytosolic endo-beta-N-acetylglucosaminidase 1 from Arabidopsis thaliana (Mouse-ear cress).